Consider the following 282-residue polypeptide: Pantothenate synthetase (282 aa).

ATP is bound at residue 30 to 37 (MGALHRGH). The active-site Proton donor is histidine 37. Glutamine 61 contacts (R)-pantoate. Position 61 (glutamine 61) interacts with beta-alanine. 147-150 (GEKD) serves as a coordination point for ATP. Residue glutamine 153 participates in (R)-pantoate binding. 184–187 (LSSR) is a binding site for ATP.

This sequence belongs to the pantothenate synthetase family. As to quaternary structure, homodimer.

Its subcellular location is the cytoplasm. It carries out the reaction (R)-pantoate + beta-alanine + ATP = (R)-pantothenate + AMP + diphosphate + H(+). It functions in the pathway cofactor biosynthesis; (R)-pantothenate biosynthesis; (R)-pantothenate from (R)-pantoate and beta-alanine: step 1/1. Its function is as follows. Catalyzes the condensation of pantoate with beta-alanine in an ATP-dependent reaction via a pantoyl-adenylate intermediate. This is Pantothenate synthetase from Rhizorhabdus wittichii (strain DSM 6014 / CCUG 31198 / JCM 15750 / NBRC 105917 / EY 4224 / RW1) (Sphingomonas wittichii).